Consider the following 83-residue polypeptide: uncharacterized protein (83 aa).

2 helical membrane passes run 23 to 43 (GGCY…SAIA) and 49 to 69 (SLWW…VVYG).

It is found in the cell membrane. This is an uncharacterized protein from Mycobacterium tuberculosis (strain CDC 1551 / Oshkosh).